A 257-amino-acid chain; its full sequence is MIKRTLLAAAIFSALPAYAGLTSITAGYDFTDYSGDHGNRNLAYAELVAKVENATLLFNLSQGRRDYETEHFNATRGQGAVWYKWNNWLTTRTGIAFADNTPVFARQDFRQDINLALLPKTLFTTGYRYTKYYDDVEVDAWQGGVSLYTGPVITSYRYTHYDSSDAGGSYSNMISVRLNDPRGTGYTQLWLSRGTGAYTYDWTPETRYGSMKSVSLQRIQPLTEQLNLGLTAGKVWYDTPTDDFNGLQLAARLTWKF.

The signal sequence occupies residues 1-19 (MIKRTLLAAAIFSALPAYA).

It localises to the cell outer membrane. This is Outer membrane protein YaiO (yaiO) from Escherichia coli (strain K12).